Here is a 587-residue protein sequence, read N- to C-terminus: Ankyrin repeat and SOCS box protein 14 (587 aa).

ANK repeat units follow at residues 82–112, 117–146, 150–179, 183–212, 216–245, 248–277, 281–310, 313–342, 355–384, 385–414, and 416–449; these read IGWIPLHKAAVQLNRKILEITLSASDPSLWE, NGETPLFLAVSSCLLENATFLLLNGCNPNA, EGNSPLLAAVLRDCYDMAALLINYGADVNL, NERTALHEAAKLGREDMVKLMLVSGAHPDP, YGFTPLALAAQSGHTEIMEMLLRKGKIFCL, DSSSILLEAASGGNPDAVALLLEYGADANI, SGHLPIHVAADRGHLLALKILIPVTDLAAI, SGISPVHCAAAGAHPQCLELLIQAGFDVNF, HRKSALYFAVSNSDLSSVKLLLSAGALPNQ, DPVNCLQIALRMGNYELISLLLRHGANVNY, and CRVNPLHFPSALQYTLKDEVMLRMLLNYGYDTER. Positions 521 to 576 constitute an SOCS box domain; it reads WSEIHFILTNPRSLKHLCRLKIRKCMGRLHLRCPVFMSFLPLPNRLKAYVLYKEYD.

Belongs to the ankyrin SOCS box (ASB) family. As to quaternary structure, interacts with MAPRE2; this interaction promotes MAPRE2 degradation.

The protein operates within protein modification; protein ubiquitination. Its function is as follows. May be a substrate-recognition component of a SCF-like ECS (Elongin-Cullin-SOCS-box protein) E3 ubiquitin-protein ligase complex which mediates the ubiquitination and subsequent proteasomal degradation of target proteins. Plays a role in the inhibition of cardiomyocyte nuclear proliferation by mediating the ubiquitination and degradation of MAPRE2. The protein is Ankyrin repeat and SOCS box protein 14 (ASB14) of Homo sapiens (Human).